Consider the following 63-residue polypeptide: Large ribosomal subunit protein bL32 (63 aa).

The interval 1 to 23 (MATPKAKVSKSRRDKRRAQFTAR) is disordered. Positions 7 to 18 (KVSKSRRDKRRA) are enriched in basic residues.

It belongs to the bacterial ribosomal protein bL32 family.

This Chlorobium phaeobacteroides (strain BS1) protein is Large ribosomal subunit protein bL32.